The primary structure comprises 87 residues: Small ribosomal subunit protein uS17 (87 aa).

Belongs to the universal ribosomal protein uS17 family. In terms of assembly, part of the 30S ribosomal subunit.

Functionally, one of the primary rRNA binding proteins, it binds specifically to the 5'-end of 16S ribosomal RNA. The protein is Small ribosomal subunit protein uS17 of Geobacillus thermodenitrificans (strain NG80-2).